The sequence spans 400 residues: S-adenosylmethionine sensor upstream of mTORC1 (400 aa).

S-adenosyl-L-methionine contacts are provided by arginine 99, glycine 168, aspartate 186, aspartate 198, phenylalanine 199, and serine 240.

This sequence belongs to the BMT2/SAMTOR family. As to quaternary structure, interacts with the GATOR1 complex; interaction is disrupted when samtor binds S-adenosyl-L-methionine. Interacts with the KICSTOR complex; interaction is disrupted when samtor binds S-adenosyl-L-methionine.

Functionally, S-adenosyl-L-methionine-binding protein that acts as an inhibitor of mTORC1 signaling via interaction with the GATOR1 and KICSTOR complexes. Acts as a sensor of S-adenosyl-L-methionine to signal methionine sufficiency to mTORC1: in presence of methionine, binds S-adenosyl-L-methionine, leading to disrupt interaction with the GATOR1 and KICSTOR complexes and promote mTORC1 signaling. Upon methionine starvation, S-adenosyl-L-methionine levels are reduced, thereby promoting the association with GATOR1 and KICSTOR, leading to inhibit mTORC1 signaling. Probably also acts as a S-adenosyl-L-methionine-dependent methyltransferase. The protein is S-adenosylmethionine sensor upstream of mTORC1 of Xenopus tropicalis (Western clawed frog).